The chain runs to 231 residues: MKIAVIGAMEEEVTILRDQLKNATQENIAGCEFTTGVYEDKEVILLKSGIGKVNAAVSTTLLLDRFQPDYVINTGSAGGFHHTLNVGDIVISTDVRHHDVDVTIFNYEYGQVPGLPAAFVADEKLVKLAEESALEIDHIQVAKGTIATGDSFMNDPNRVAFVREKFPELYAVEMEAAAVAQVCQLFGTPFVVVRALSDIAGKESNVSFDQFLEQAAIHSTDLVLRMIKQTQ.

Glu-12 acts as the Proton acceptor in catalysis. Residues Gly-78, Met-153, and 174 to 175 contribute to the substrate site; that span reads ME. Asp-198 (proton donor) is an active-site residue.

Belongs to the PNP/UDP phosphorylase family. MtnN subfamily.

It carries out the reaction S-adenosyl-L-homocysteine + H2O = S-(5-deoxy-D-ribos-5-yl)-L-homocysteine + adenine. The enzyme catalyses S-methyl-5'-thioadenosine + H2O = 5-(methylsulfanyl)-D-ribose + adenine. It catalyses the reaction 5'-deoxyadenosine + H2O = 5-deoxy-D-ribose + adenine. The protein operates within amino-acid biosynthesis; L-methionine biosynthesis via salvage pathway; S-methyl-5-thio-alpha-D-ribose 1-phosphate from S-methyl-5'-thioadenosine (hydrolase route): step 1/2. Functionally, catalyzes the irreversible cleavage of the glycosidic bond in both 5'-methylthioadenosine (MTA) and S-adenosylhomocysteine (SAH/AdoHcy) to adenine and the corresponding thioribose, 5'-methylthioribose and S-ribosylhomocysteine, respectively. Also cleaves 5'-deoxyadenosine, a toxic by-product of radical S-adenosylmethionine (SAM) enzymes, into 5-deoxyribose and adenine. The protein is 5'-methylthioadenosine/S-adenosylhomocysteine nucleosidase of Bacillus pumilus (strain SAFR-032).